A 242-amino-acid chain; its full sequence is Caffeoyl-CoA O-methyltransferase 3 (242 aa).

K16 serves as a coordination point for substrate. S-adenosyl-L-methionine is bound by residues T58, E80, 82 to 83 (GV), S88, D106, and A135. D158 provides a ligand contact to substrate. D158 serves as a coordination point for a divalent metal cation. D160 serves as a coordination point for S-adenosyl-L-methionine. Residues D184 and N185 each coordinate a divalent metal cation. N189 contacts substrate.

The protein belongs to the class I-like SAM-binding methyltransferase superfamily. Cation-dependent O-methyltransferase family. CCoAMT subfamily. Mg(2+) is required as a cofactor. Mostly expressed in the bottom and middle parts of the stems.

It catalyses the reaction (E)-caffeoyl-CoA + S-adenosyl-L-methionine = (E)-feruloyl-CoA + S-adenosyl-L-homocysteine + H(+). It participates in aromatic compound metabolism; phenylpropanoid biosynthesis. In terms of biological role, methylates caffeoyl-CoA to feruloyl-CoA and 5-hydroxyferuloyl-CoA to sinapoyl-CoA. Plays a role in the synthesis of feruloylated polysaccharides. Involved in the reinforcement of the plant cell wall. Also involved in the responding to wounding or pathogen challenge by the increased formation of cell wall-bound ferulic acid polymers. Also methylates free caffeic and 5-hydroxyferulic acids. The polypeptide is Caffeoyl-CoA O-methyltransferase 3 (CCOAOMT3) (Nicotiana tabacum (Common tobacco)).